The sequence spans 170 residues: uncharacterized protein (170 aa).

The first 28 residues, 1 to 28, serve as a signal peptide directing secretion; the sequence is MTGGVMSQKFVVGAGLLVCSVCSLSAMA.

The protein belongs to the fimbrial protein family.

Its function is as follows. Part of the yfcOPQRSUV fimbrial operon. Could contribute to adhesion to various surfaces in specific environmental niches. Increases adhesion to eukaryotic T24 bladder epithelial cells in the absence of fim genes. This is an uncharacterized protein from Escherichia coli (strain K12).